Reading from the N-terminus, the 508-residue chain is Histidine ammonia-lyase (508 aa).

Positions 145–147 (ASG) form a cross-link, 5-imidazolinone (Ala-Gly). 2,3-didehydroalanine (Ser) is present on serine 146.

This sequence belongs to the PAL/histidase family. In terms of processing, contains an active site 4-methylidene-imidazol-5-one (MIO), which is formed autocatalytically by cyclization and dehydration of residues Ala-Ser-Gly.

The protein localises to the cytoplasm. It catalyses the reaction L-histidine = trans-urocanate + NH4(+). Its pathway is amino-acid degradation; L-histidine degradation into L-glutamate; N-formimidoyl-L-glutamate from L-histidine: step 1/3. The sequence is that of Histidine ammonia-lyase from Myxococcus xanthus (strain DK1622).